A 344-amino-acid chain; its full sequence is Small ribosomal subunit protein bS1m (344 aa).

At Ser327 the chain carries Phosphoserine.

It belongs to the bacterial ribosomal protein bS1 family. In terms of assembly, component of the mitochondrial small ribosomal subunit (mt-SSU). Mature yeast 74S mitochondrial ribosomes consist of a small (37S) and a large (54S) subunit. The 37S small subunit contains a 15S ribosomal RNA (15S mt-rRNA) and 34 different proteins. The 54S large subunit contains a 21S rRNA (21S mt-rRNA) and 46 different proteins.

It is found in the mitochondrion. In terms of biological role, component of the mitochondrial ribosome (mitoribosome), a dedicated translation machinery responsible for the synthesis of mitochondrial genome-encoded proteins, including at least some of the essential transmembrane subunits of the mitochondrial respiratory chain. The mitoribosomes are attached to the mitochondrial inner membrane and translation products are cotranslationally integrated into the membrane. bS1m functionally interacts with the 5'-UTR of mitochondrial mRNAs. The sequence is that of Small ribosomal subunit protein bS1m (MRP51) from Saccharomyces cerevisiae (strain ATCC 204508 / S288c) (Baker's yeast).